The chain runs to 310 residues: GMP synthase [glutamine-hydrolyzing] subunit B (310 aa).

Positions 2–185 (FDAKSFIEES…LGLPEKIAHR (184 aa)) constitute a GMPS ATP-PPase domain. 29–35 (SGGVDSS) contributes to the ATP binding site.

As to quaternary structure, heterodimer composed of a glutamine amidotransferase subunit (A) and a GMP-binding subunit (B).

It carries out the reaction XMP + L-glutamine + ATP + H2O = GMP + L-glutamate + AMP + diphosphate + 2 H(+). It participates in purine metabolism; GMP biosynthesis; GMP from XMP (L-Gln route): step 1/1. In terms of biological role, catalyzes the synthesis of GMP from XMP. In Methanococcus vannielii (strain ATCC 35089 / DSM 1224 / JCM 13029 / OCM 148 / SB), this protein is GMP synthase [glutamine-hydrolyzing] subunit B.